The primary structure comprises 318 residues: Pyrimidine-specific ribonucleoside hydrolase RihA (318 aa).

His-240 is a catalytic residue.

Belongs to the IUNH family. RihA subfamily.

Hydrolyzes cytidine or uridine to ribose and cytosine or uracil, respectively. This Shewanella sp. (strain MR-4) protein is Pyrimidine-specific ribonucleoside hydrolase RihA.